The chain runs to 222 residues: Protein DEHYDRATION-INDUCED 19 homolog 6 (222 aa).

Position 116 is a phosphoserine (S116).

It belongs to the Di19 family. In terms of processing, phosphorylated in vitro by CPK3 or CPK11. In terms of tissue distribution, expressed in seedlings, roots, leaves, stems, flowers and siliques.

The protein resides in the nucleus. The polypeptide is Protein DEHYDRATION-INDUCED 19 homolog 6 (DI19-6) (Arabidopsis thaliana (Mouse-ear cress)).